We begin with the raw amino-acid sequence, 141 residues long: Lutropin subunit beta (141 aa).

The first 20 residues, 1–20, serve as a signal peptide directing secretion; it reads MEMLQGLLLLLLLSMGGAWA. 6 cysteine pairs are disulfide-bonded: Cys-29/Cys-77, Cys-43/Cys-92, Cys-46/Cys-130, Cys-54/Cys-108, Cys-58/Cys-110, and Cys-113/Cys-120. Asn-33 and Asn-50 each carry an N-linked (GlcNAc...) asparagine glycan.

The protein belongs to the glycoprotein hormones subunit beta family. Heterodimer of a common alpha chain and a unique beta chain which confers biological specificity to thyrotropin, lutropin, follitropin and gonadotropin.

It is found in the secreted. Functionally, promotes spermatogenesis and ovulation by stimulating the testes and ovaries to synthesize steroids. The polypeptide is Lutropin subunit beta (LHB) (Gorilla gorilla gorilla (Western lowland gorilla)).